A 401-amino-acid polypeptide reads, in one-letter code: Exodeoxyribonuclease 7 large subunit (401 aa).

The protein belongs to the XseA family. As to quaternary structure, heterooligomer composed of large and small subunits.

Its subcellular location is the cytoplasm. It carries out the reaction Exonucleolytic cleavage in either 5'- to 3'- or 3'- to 5'-direction to yield nucleoside 5'-phosphates.. Bidirectionally degrades single-stranded DNA into large acid-insoluble oligonucleotides, which are then degraded further into small acid-soluble oligonucleotides. The protein is Exodeoxyribonuclease 7 large subunit of Clostridium botulinum (strain Langeland / NCTC 10281 / Type F).